Reading from the N-terminus, the 223-residue chain is Glutathione S-transferase A2 (223 aa).

Ala2 is subject to N-acetylalanine. Positions 3–83 (GKPKLHYFNG…YIATKYNLYG (81 aa)) constitute a GST N-terminal domain. Lys4 carries the N6-succinyllysine modification. Residues Tyr9, Arg45, 54-55 (QV), and 67-68 (QT) contribute to the glutathione site. A GST C-terminal domain is found at 85-208 (DMKERALIDM…QPGSQRKPPM (124 aa)).

The protein belongs to the GST superfamily. Alpha family. Homodimer. As to expression, expressed in corpus luteum, adrenal gland, testis, liver, lung, thyroid and kidney.

It localises to the cytoplasm. The catalysed reaction is RX + glutathione = an S-substituted glutathione + a halide anion + H(+). Conjugation of reduced glutathione to a wide number of exogenous and endogenous hydrophobic electrophiles. This Bos taurus (Bovine) protein is Glutathione S-transferase A2 (GSTA2).